Reading from the N-terminus, the 236-residue chain is Probable metal transport system ATP-binding protein CT_416 (236 aa).

In terms of domain architecture, ABC transporter spans 5–236 (MLLENVSFRY…FCCNTFGRCP (232 aa)). Position 39–46 (39–46 (GPNGGGKT)) interacts with ATP.

The protein belongs to the ABC transporter superfamily.

The protein localises to the cell inner membrane. Part of an ATP-driven transport system CT_415/CT_416/CT_417 for a metal. Probably responsible for energy coupling to the transport system. The protein is Probable metal transport system ATP-binding protein CT_416 of Chlamydia trachomatis serovar D (strain ATCC VR-885 / DSM 19411 / UW-3/Cx).